The following is a 367-amino-acid chain: Apurinic-apyrimidinic endonuclease 1 (367 aa).

Positions 83, 123, 158, 192, 195, 229, 242, 244, and 274 each coordinate Zn(2+). A disordered region spans residues 312–367 (DTLQKLGAKSRKEQLDKFEVKQKKRAGGTKRKKATAEPSDNDILSQMTKKRKTKKE). Basic and acidic residues predominate over residues 321 to 332 (SRKEQLDKFEVK). The span at 333–344 (QKKRAGGTKRKK) shows a compositional bias: basic residues. Residue serine 356 is modified to Phosphoserine.

It belongs to the AP endonuclease 2 family. In terms of assembly, monomer. Requires Zn(2+) as cofactor.

The protein localises to the nucleus. In terms of biological role, DNA repair enzyme that cleaves apurinic/apyrimidinic (AP) sites and removes 3'-blocking groups present at single strand breaks of damaged DNA. APN1 accounts for &gt; 97% of both apurinic/apyrimidinic (AP) endonuclease and DNA 3'-repair diesterase activities. The protein is Apurinic-apyrimidinic endonuclease 1 (APN1) of Saccharomyces cerevisiae (strain ATCC 204508 / S288c) (Baker's yeast).